Consider the following 357-residue polypeptide: Heme A synthase (357 aa).

Transmembrane regions (helical) follow at residues 24–44 (LVRY…MVGG), 110–130 (MLAR…WVTG), 140–160 (MLGL…MVAS), 175–195 (IHLT…RGLV), and 209–229 (FAGW…LVAG). Heme is bound at residue His272. Transmembrane regions (helical) follow at residues 274-294 (MFAY…WKQV), 303-323 (TIVL…TLLM), and 325-345 (VPLH…AFAV). Residue His333 participates in heme binding.

It belongs to the COX15/CtaA family. Type 2 subfamily. Interacts with CtaB. Heme b serves as cofactor.

The protein resides in the cell membrane. It carries out the reaction Fe(II)-heme o + 2 A + H2O = Fe(II)-heme a + 2 AH2. Its pathway is porphyrin-containing compound metabolism; heme A biosynthesis; heme A from heme O: step 1/1. Catalyzes the conversion of heme O to heme A by two successive hydroxylations of the methyl group at C8. The first hydroxylation forms heme I, the second hydroxylation results in an unstable dihydroxymethyl group, which spontaneously dehydrates, resulting in the formyl group of heme A. The protein is Heme A synthase of Brucella anthropi (strain ATCC 49188 / DSM 6882 / CCUG 24695 / JCM 21032 / LMG 3331 / NBRC 15819 / NCTC 12168 / Alc 37) (Ochrobactrum anthropi).